Consider the following 186-residue polypeptide: NADH-dependent FMN reductase SfnE (186 aa).

The protein belongs to the SsuE family.

The catalysed reaction is FMNH2 + NAD(+) = FMN + NADH + 2 H(+). Involved in the dimethyl sulfide degradation pathway. Catalyzes the NADH-dependent reduction of FMN. In Pseudomonas putida (Arthrobacter siderocapsulatus), this protein is NADH-dependent FMN reductase SfnE.